The primary structure comprises 7260 residues: Nonribosomal peptide synthetase ecdA (7260 aa).

The region spanning 4-80 (TNEMERKRVF…ELFETIQYLQ (77 aa)) is the Carrier 1 domain. Residue Ser-41 is modified to O-(pantetheine 4'-phosphoryl)serine. The condensation 1 stretch occupies residues 134–549 (EDVYPSTPLQ…SINEILTLPA (416 aa)). The segment at 575 to 965 (QDQVRSQPAA…DGSLLYVGRC (391 aa)) is adenylation 1. Residues 1090 to 1166 (APSTAIEHKL…DLARELEGRN (77 aa)) enclose the Carrier 2 domain. Ser-1127 is subject to O-(pantetheine 4'-phosphoryl)serine. The condensation 2 stretch occupies residues 1208–1628 (EDIIPCTAMQ…LGDLSLLSAD (421 aa)). The adenylation 2 stretch occupies residues 1653 to 2054 (EEQITARPDS…GRRDTQIKIR (402 aa)). The Carrier 3 domain maps to 2188 to 2264 (TPSTPTESQL…DLANLLSSRF (77 aa)). Ser-2225 carries the post-translational modification O-(pantetheine 4'-phosphoryl)serine. The interval 2314–2719 (QDVYPCTPLQ…THVVQQLCDP (406 aa)) is condensation 3. The tract at residues 2763–3156 (KQALAQPNAP…GRRDTQVKIR (394 aa)) is adenylation 3. A Carrier 4 domain is found at 3287-3365 (QPATEMEKML…ELAQVLEERV (79 aa)). Ser-3324 bears the O-(pantetheine 4'-phosphoryl)serine mark. A condensation 4 region spans residues 3417 to 3831 (VQDVYPCTPL…LLSPNDQQQI (415 aa)). The tract at residues 3851–4248 (EEQAMAHPTK…SFVYVARRNT (398 aa)) is adenylation 4. In terms of domain architecture, Carrier 5 spans 4394–4471 (APATAMERTL…DLANLLADGA (78 aa)). An O-(pantetheine 4'-phosphoryl)serine modification is found at Ser-4431. A condensation 5 region spans residues 4510 to 4910 (EDIYPATPLQ…HFVHVAEQLF (401 aa)). Residues 4955–5357 (ERAALQPNAP…GRRDLQVKIR (403 aa)) form an adenylation 5 region. The region spanning 5496–5573 (APRTVMEQQV…DLALVLSERG (78 aa)) is the Carrier 6 domain. O-(pantetheine 4'-phosphoryl)serine is present on Ser-5533. The interval 5622–6043 (EDVYPCTPLQ…AVSEKDERQI (422 aa)) is condensation 6. Residues 6063–6460 (QEQVARTPGE…GRHDSQVKIR (398 aa)) are adenylation 6. Positions 6592-6668 (APSTAMERQL…EVAQVVEDRV (77 aa)) constitute a Carrier 7 domain. Residue Ser-6629 is modified to O-(pantetheine 4'-phosphoryl)serine. The segment at 6718-7133 (LPTTDFQALT…ILDSPGLLVS (416 aa)) is condensation 7. Residues 7241–7260 (CEEAEKSASVTSSERRLATI) form a disordered region.

Belongs to the NRP synthetase family.

It functions in the pathway antifungal biosynthesis. In terms of biological role, nonribosomal peptide synthetase; part of the gene cluster that mediates the biosynthesis of echinocandin B, a fungal lipidated cyclic hexapeptide that acts as an antifungal agent. Linoleoyl-AMP, produced by the fatty-acyl-AMP ligase ecdI, is transferred to the initiation carrier domain (T0) of ecdA. The linoleoyl-S-phosphopantetheinyl-T0 is sequentially extended with L-ornithine, L-threonine, L-proline, L-homotyrosine, L-threonine, and 4R-methyl-L-proline to form the linear hexapeptide. Thereafter, the terminal condensation (C7) performs macrocyclization of the NRPS product and the cyclic scaffold is released from ecdA. All six of the amino acid residues are hydroxylated, including 4R,5R-dihydroxy-L-ornithine, 4R-hydroxyl-L-proline, 3S,4S-dihydroxy-L-homotyrosine, and 3S-hydroxyl-4S-methyl-L-prolin. In the pathway, all the hydroxylation reactions are proposed to occur following completion of the cyclic peptide, so the unhydroxylated precursor produced by ecdA will undergo six rounds of hydroxylation. Five hydroxylase genes (ecdG, ecdH, ecdK, htyE and htyF) are embedded within the echinocandin B (ecd) and L-homotyrosine (hty) clusters. This chain is Nonribosomal peptide synthetase ecdA, found in Aspergillus rugulosus (Emericella rugulosa).